Reading from the N-terminus, the 171-residue chain is Lipoprotein signal peptidase (171 aa).

4 helical membrane-spanning segments follow: residues 15–35 (WLWL…IVMD), 47–67 (VLPF…SFLS), 72–92 (WQRW…AYWM), and 107–127 (ALII…GFVV). Active-site residues include Asp128 and Asp146. Residues 141–161 (AFNLADSTICIGAAMIILDGF) form a helical membrane-spanning segment.

Belongs to the peptidase A8 family.

The protein localises to the cell inner membrane. It carries out the reaction Release of signal peptides from bacterial membrane prolipoproteins. Hydrolyzes -Xaa-Yaa-Zaa-|-(S,diacylglyceryl)Cys-, in which Xaa is hydrophobic (preferably Leu), and Yaa (Ala or Ser) and Zaa (Gly or Ala) have small, neutral side chains.. The protein operates within protein modification; lipoprotein biosynthesis (signal peptide cleavage). In terms of biological role, this protein specifically catalyzes the removal of signal peptides from prolipoproteins. The polypeptide is Lipoprotein signal peptidase (Vibrio cholerae serotype O1 (strain ATCC 39315 / El Tor Inaba N16961)).